The chain runs to 259 residues: Protein unc-50 homolog A (259 aa).

Residues 1–82 (MLPTTSVSPR…TKDQWARDDP (82 aa)) lie on the Cytoplasmic side of the membrane. The helical transmembrane segment at 83 to 103 (AFLVLLSIWLCVSTVGFGFVL) threads the bilayer. The Lumenal portion of the chain corresponds to 104–112 (DMSFFETFK). The helical transmembrane segment at 113 to 133 (LLLWVVFIDCVGVGLLIATLM) threads the bilayer. Topologically, residues 134-158 (WFVSNKYMVKRQGKDYDVEWGYTFD) are cytoplasmic. Residues 159–179 (VHLNAFYPLLVILHFIQLFFI) form a helical membrane-spanning segment. The Lumenal segment spans residues 180–181 (NH). The helical transmembrane segment at 182-202 (VILSGWFIGYFVGNTIWLIAI) threads the bilayer. At 203–222 (GYYIYITFLGYSALPFLKNT) the chain is on the cytoplasmic side. Residues 223-243 (VILLYPFAALALLYVLSLALG) form a helical membrane-spanning segment. Over 244-259 (WNFTEKLCLFYKYRVR) the chain is Lumenal.

It belongs to the unc-50 family.

Its subcellular location is the nucleus inner membrane. It is found in the golgi apparatus membrane. Functionally, involved in the cell surface expression of neuronal nicotinic receptors. Binds RNA. This Xenopus laevis (African clawed frog) protein is Protein unc-50 homolog A (unc50-a).